A 305-amino-acid polypeptide reads, in one-letter code: HPr kinase/phosphorylase (305 aa).

Catalysis depends on residues His-138 and Lys-159. 153–160 (GESGIGKS) contacts ATP. Ser-160 is a binding site for Mg(2+). Asp-177 (proton acceptor; for phosphorylation activity. Proton donor; for dephosphorylation activity) is an active-site residue. Residues 201–210 (IEIRGIGILD) are important for the catalytic mechanism of both phosphorylation and dephosphorylation. Residue Glu-202 coordinates Mg(2+). Arg-243 is an active-site residue. The tract at residues 264-269 (PVRPGR) is important for the catalytic mechanism of dephosphorylation.

The protein belongs to the HPrK/P family. In terms of assembly, homohexamer. It depends on Mg(2+) as a cofactor.

It carries out the reaction [HPr protein]-L-serine + ATP = [HPr protein]-O-phospho-L-serine + ADP + H(+). The catalysed reaction is [HPr protein]-O-phospho-L-serine + phosphate + H(+) = [HPr protein]-L-serine + diphosphate. Catalyzes the ATP- as well as the pyrophosphate-dependent phosphorylation of a specific serine residue in HPr, a phosphocarrier protein of the phosphoenolpyruvate-dependent sugar phosphotransferase system (PTS). HprK/P also catalyzes the pyrophosphate-producing, inorganic phosphate-dependent dephosphorylation (phosphorolysis) of seryl-phosphorylated HPr (P-Ser-HPr). The two antagonistic activities of HprK/P are regulated by several intracellular metabolites, which change their concentration in response to the absence or presence of rapidly metabolisable carbon sources (glucose, fructose, etc.) in the growth medium. Therefore, by controlling the phosphorylation state of HPr, HPrK/P is a sensor enzyme that plays a major role in the regulation of carbon metabolism and sugar transport: it mediates carbon catabolite repression (CCR), and regulates PTS-catalyzed carbohydrate uptake and inducer exclusion. The polypeptide is HPr kinase/phosphorylase (Caldanaerobacter subterraneus subsp. tengcongensis (strain DSM 15242 / JCM 11007 / NBRC 100824 / MB4) (Thermoanaerobacter tengcongensis)).